Here is a 388-residue protein sequence, read N- to C-terminus: Staphopain A (388 aa).

Residues 1-25 (MKRNFPKLIALSLILSLSVTPIANA) form the signal peptide. The propeptide occupies 26 to 214 (ESNSNIKAKD…TSQFKSNNYT (189 aa)). Residues cysteine 238, histidine 334, and asparagine 355 contribute to the active site.

This sequence belongs to the peptidase C47 family. In terms of assembly, in the cytoplasm, prematurely activated/folded ScpA forms a stable non-covalent complex with ScpB. In terms of processing, cleavage leads to the activation of ScpA probably by an auto-catalytic manner.

It is found in the secreted. The catalysed reaction is Broad endopeptidase action on proteins including elastin, but rather limited hydrolysis of small-molecule substrates. Assays are conveniently made with hemoglobin, casein or Z-Phe-Arg-NHMec as substrate.. Prematurely activated/folded staphopain A is inhibited by staphostatin A (ScpB), which is probably required to protect staphylococcal cytoplasmic proteins from degradation by ScpA. Cysteine protease that plays an important role in the inhibition of host innate immune response. Cleaves host elastins found in connective tissues, pulmonary surfactant protein A in the lungs, and the chemokine receptor CXCR2 on leukocytes. Proteolytic cleavage of surfactant protein A impairs bacterial phagocytosis by neutrophils while CXCR2 degradation blocks neutrophil activation and chemotaxis. Additionally, promotes vascular leakage by activating the plasma kallikerin/kinin system, resulting in hypotension. The protein is Staphopain A (sspP) of Staphylococcus aureus (strain MSSA476).